The following is a 171-amino-acid chain: bZIP transcription factor 2 (171 aa).

Over residues methionine 1–serine 24 the composition is skewed to low complexity. The tract at residues methionine 1–valine 54 is disordered. A bZIP domain is found at aspartate 29–leucine 92. Residues arginine 31–lysine 52 form a basic motif region. The tract at residues leucine 57 to isoleucine 71 is leucine-zipper.

In terms of assembly, forms heterodimers with BZIP9, BZIP10, BZIP25 and BZIP63. Component of a ternary complex composed of BZIP2-BZIP63 heterodimer and KIN10.

It localises to the nucleus. Functionally, transcription factor that binds to specific DNA sequences in target gene promoters. BZIP2-BZIP63-KIN10 complex binds to the ETFQO promoter to up-regulate its transcription. This is bZIP transcription factor 2 from Arabidopsis thaliana (Mouse-ear cress).